The sequence spans 544 residues: Lariat debranching enzyme (544 aa).

4 residues coordinate a divalent metal cation: C8, H10, D39, and N84. Residues 124-154 (SGIFKSHDYRKGHFECPPYNSSTIRSIYHVR) form a lariat recognition loop region. K128 carries the N6-acetyllysine modification. Residues H174, H226, and H228 each contribute to the a divalent metal cation site. Acidic residues predominate over residues 395-412 (EYEEQDDVESNDSGEDQS). The tract at residues 395–463 (EYEEQDDVES…PSDQASEFSA (69 aa)) is disordered. Residues 413–425 (EYNTDTSALSSIN) show a composition bias toward polar residues. A compositionally biased stretch (acidic residues) spans 429–439 (IMLDEEEDEDS). The segment covering 445 to 463 (SGMNTPSVEPSDQASEFSA) has biased composition (polar residues). 7 positions are modified to phosphoserine: S464, S474, S478, S479, S485, S499, and S514. The tract at residues 476–544 (IVSSDDTVDS…AVDDDDDDAA (69 aa)) is disordered. Over residues 512–522 (RLSDEHEPEQR) the composition is skewed to basic and acidic residues.

Belongs to the lariat debranching enzyme family. The cofactor is Fe(2+). Zn(2+) is required as a cofactor. It depends on Mn(2+) as a cofactor. Ubiquitously expressed, strongest expression in the spinal cord and brainstem.

It localises to the nucleus. Its activity is regulated as follows. Active in presence of diverse metals including Fe(2+), Zn(2+), Mn(2+). Also activated by Ca(2+). Binds two metal cations in two adjacent alpha and beta metal-binding pockets. In terms of biological role, cleaves the 2'-5' phosphodiester linkage at the branch point of excised lariat intron RNA and converts them into linear molecules that can be subsequently degraded, thereby facilitating ribonucleotide turnover. Linked to its role in pre-mRNA processing mechanism, may also participate in retrovirus replication via an RNA lariat intermediate in cDNA synthesis and have an antiviral cell-intrinsic defense function in the brainstem. The chain is Lariat debranching enzyme (DBR1) from Homo sapiens (Human).